Consider the following 601-residue polypeptide: MVNFSRKRPAVSSLFSQQQAIEQSLNWQALQPDLVIQDFPLEPVNFWALQPNATQGIDLFLRHPTRSLLMMKVGEPVEYAELLQNFISQNHHKVRSIFGVNYVIEQGDSFSFPHVYTEPAKSLDDNFASQGEALSALYCDQFQLFGSFRIHPRSQDIQLVPGLVHKANGGVLILSAATLLSQFDLWGRLKQILQTQTFDWYSAHPFKNLPCDIPSYALNLKVIVLGNRTELATLAELEENLYSFADYAEIESYISVAEVEEQKTWAGYVQQMAQEQNIELDFLALNKLYQLLVRESENRFLINASPLKLKEILQDASTFTEKTALSAVDFEGIFQQKLAQYGFLKEQTYADILNEQVYVETQGEIVGQINGLSVIEYPGTPVCFGEPSRISCIVQFGDGEVIDVERKNELAGNIHGKGMMIAQACLSNILDLPSQLPFSASLVFEQSYGEIDGDSASLAIFCVLVSALADLPLPQHIAITGSIDQFGLVHSVGGVNDKIEGFFTICQRRGLTGKQGVIIPMTTIQQLSLSDDVKSAVKNGEFFIYPVEDIYQACELLFGRDLLDENKDYTEKTESLSRLIQRRIEGRADSERKSFWHFFRS.

In terms of domain architecture, Lon proteolytic spans 363–560 (GEIVGQINGL…YQACELLFGR (198 aa)). Active-site residues include serine 455 and lysine 498.

The protein belongs to the peptidase S16 family.

This is Putative Lon protease homolog from Haemophilus influenzae (strain ATCC 51907 / DSM 11121 / KW20 / Rd).